Here is a 510-residue protein sequence, read N- to C-terminus: Bifunctional pantoate ligase/cytidylate kinase (510 aa).

The pantoate--beta-alanine ligase stretch occupies residues 1–276; that stretch reads MKKVIIRKTE…CGETRLIDHV (276 aa). Residue 29–36 participates in ATP binding; that stretch reads MGNLHNGH. Residue His36 is the Proton donor of the active site. Gln61 is a binding site for (R)-pantoate. Gln61 contacts beta-alanine. 150–153 provides a ligand contact to ATP; the sequence is GEKD. Position 156 (Gln156) interacts with (R)-pantoate. An ATP-binding site is contributed by 187–190; sequence LSSR. The tract at residues 277 to 510 is cytidylate kinase; the sequence is FLMKRSPIIA…DKIPKETQIR (234 aa).

It in the N-terminal section; belongs to the pantothenate synthetase family. The protein in the C-terminal section; belongs to the cytidylate kinase family. Type 1 subfamily.

Its subcellular location is the cytoplasm. It catalyses the reaction (R)-pantoate + beta-alanine + ATP = (R)-pantothenate + AMP + diphosphate + H(+). The enzyme catalyses CMP + ATP = CDP + ADP. The catalysed reaction is dCMP + ATP = dCDP + ADP. The protein operates within cofactor biosynthesis; (R)-pantothenate biosynthesis; (R)-pantothenate from (R)-pantoate and beta-alanine: step 1/1. Functionally, catalyzes the condensation of pantoate with beta-alanine in an ATP-dependent reaction via a pantoyl-adenylate intermediate. Catalyzes the transfer of a phosphate group from ATP to either CMP or dCMP to form CDP or dCDP and ADP, respectively. This Prochlorococcus marinus (strain MIT 9312) protein is Bifunctional pantoate ligase/cytidylate kinase.